Reading from the N-terminus, the 520-residue chain is 2-isopropylmalate synthase (520 aa).

The Pyruvate carboxyltransferase domain maps to 12–274 (IRIFDTTLRD…DSAINTPRIV (263 aa)). Positions 21, 209, 211, and 245 each coordinate Mn(2+). Residues 396–520 (RLASMTISDV…VIAGKTAAVA (125 aa)) form a regulatory domain region.

The protein belongs to the alpha-IPM synthase/homocitrate synthase family. LeuA type 1 subfamily. As to quaternary structure, homodimer. Mn(2+) is required as a cofactor.

The protein localises to the cytoplasm. It carries out the reaction 3-methyl-2-oxobutanoate + acetyl-CoA + H2O = (2S)-2-isopropylmalate + CoA + H(+). The protein operates within amino-acid biosynthesis; L-leucine biosynthesis; L-leucine from 3-methyl-2-oxobutanoate: step 1/4. Its function is as follows. Catalyzes the condensation of the acetyl group of acetyl-CoA with 3-methyl-2-oxobutanoate (2-ketoisovalerate) to form 3-carboxy-3-hydroxy-4-methylpentanoate (2-isopropylmalate). In Xanthomonas oryzae pv. oryzae (strain KACC10331 / KXO85), this protein is 2-isopropylmalate synthase.